Reading from the N-terminus, the 702-residue chain is Polyribonucleotide nucleotidyltransferase (702 aa).

The Mg(2+) site is built by Asp-485 and Asp-491. Residues 552-611 (PKTSTLQIDPEKIRDVIGAGGKVINKIIADTGVKIDIKEDGLVYVSSAESEGVKEAVKII) enclose the KH domain. An S1 motif domain is found at 621–689 (GEIYLGKVTK…SQGRINLSRK (69 aa)).

This sequence belongs to the polyribonucleotide nucleotidyltransferase family. It depends on Mg(2+) as a cofactor.

The protein resides in the cytoplasm. It catalyses the reaction RNA(n+1) + phosphate = RNA(n) + a ribonucleoside 5'-diphosphate. In terms of biological role, involved in mRNA degradation. Catalyzes the phosphorolysis of single-stranded polyribonucleotides processively in the 3'- to 5'-direction. This is Polyribonucleotide nucleotidyltransferase from Clostridium perfringens (strain ATCC 13124 / DSM 756 / JCM 1290 / NCIMB 6125 / NCTC 8237 / Type A).